The following is a 514-amino-acid chain: Peptide chain release factor 3 (514 aa).

Residues 8–268 (KKRRTFAIIS…IFLKFAPEPH (261 aa)) form the tr-type G domain. Residues 17–24 (SHPDAGKT), 85–89 (DTPGH), and 139–142 (NKLD) each bind GTP.

Belongs to the TRAFAC class translation factor GTPase superfamily. Classic translation factor GTPase family. PrfC subfamily.

The protein localises to the cytoplasm. Increases the formation of ribosomal termination complexes and stimulates activities of RF-1 and RF-2. It binds guanine nucleotides and has strong preference for UGA stop codons. It may interact directly with the ribosome. The stimulation of RF-1 and RF-2 is significantly reduced by GTP and GDP, but not by GMP. In Streptococcus pneumoniae (strain 70585), this protein is Peptide chain release factor 3.